Consider the following 343-residue polypeptide: MTITPQEALQRTIEHREIFHDEMLHLMRLIMRGDMSPVMAAAIITGLRVKKETIGEIAAAATVMREFAHHVEVPDNSNFVDIVGTGGDGAHTFNISTASMFVTAAAGAKVAKHGNRGVSSKSGSADVLEALGVNIDLQPDQVAASIAETGMGFMFAPNHHPAMKNIAAVRRELGVRTIFNILGPLTNPAGAPNQLMGVFHADLVGIQVRVMQRLGAQHVLVVYGKDGMDEVSLGAATLVGELRDGQVHEYEIHPEDFGLQMVSNRTLKVENADESRVMLLGALDNQPGVAREIVTLNAGTALYAANVAASIADGIQLAREAIASGKARAKVDELVRFTQQFKR.

5-phospho-alpha-D-ribose 1-diphosphate contacts are provided by residues G84, 87–88 (GD), T92, 94–97 (NIST), 112–120 (KHGNRGVSS), and S124. Residue G84 participates in anthranilate binding. Position 96 (S96) interacts with Mg(2+). N115 contacts anthranilate. Residue R170 participates in anthranilate binding. D229 and E230 together coordinate Mg(2+).

The protein belongs to the anthranilate phosphoribosyltransferase family. Homodimer. Mg(2+) serves as cofactor.

It catalyses the reaction N-(5-phospho-beta-D-ribosyl)anthranilate + diphosphate = 5-phospho-alpha-D-ribose 1-diphosphate + anthranilate. It functions in the pathway amino-acid biosynthesis; L-tryptophan biosynthesis; L-tryptophan from chorismate: step 2/5. Its function is as follows. Catalyzes the transfer of the phosphoribosyl group of 5-phosphorylribose-1-pyrophosphate (PRPP) to anthranilate to yield N-(5'-phosphoribosyl)-anthranilate (PRA). This is Anthranilate phosphoribosyltransferase from Burkholderia vietnamiensis (strain G4 / LMG 22486) (Burkholderia cepacia (strain R1808)).